The sequence spans 61 residues: Large ribosomal subunit protein bL32 (61 aa).

A compositionally biased stretch (basic residues) spans 1 to 22 (MAVPKKKTSKSRRDMRRSHHAL). Residues 1 to 27 (MAVPKKKTSKSRRDMRRSHHALKPSAY) form a disordered region.

Belongs to the bacterial ribosomal protein bL32 family.

The chain is Large ribosomal subunit protein bL32 from Rhodospirillum rubrum (strain ATCC 11170 / ATH 1.1.1 / DSM 467 / LMG 4362 / NCIMB 8255 / S1).